Reading from the N-terminus, the 115-residue chain is MRLLTILALCCVAIWVVESIGIEVLHETICVSLRTQRIPIQKIKTYTIKEGAMRAVIFVTKRGLRICADPDAGWTKAAITTLDKKNKKNKQKFNTTTVIPTQVPVSTNETTTVYG.

The signal sequence occupies residues 1 to 19 (MRLLTILALCCVAIWVVES). Cys30 and Cys67 are joined by a disulfide.

Belongs to the intercrine gamma family. As to quaternary structure, interacts with host XCR1. Post-translationally, N-glycosylated and O-glycosylated.

It localises to the secreted. In terms of biological role, chemoattractant for CD4-dendritic cells, but not for CD4+ dendritic cells, T-cells or B-cells. The protein is Viral Lymphotactin (vXCL1) of Rat cytomegalovirus (isolate England) (RCMV-E).